A 530-amino-acid chain; its full sequence is Sugar transport protein MST6 (530 aa).

Residues 1–18 (MAGGVVVNNGGGKDYPGK) are Cytoplasmic-facing. The helical transmembrane segment at 19 to 39 (LTMFVLFACIVAATGGLIFGY) threads the bilayer. At 40–81 (DIGISGGVTSMNPFLIKFFPSVYRKEQAAEKNQSNQYCKFDS) the chain is on the extracellular side. Residues 82-102 (PLLTMFTSSLYLAALVASFFA) form a helical membrane-spanning segment. Residues 103 to 119 (STVTRVAGRKWSMFGGG) are Cytoplasmic-facing. The helical transmembrane segment at 120–140 (VTFLVGAALNGAAKNVLMLIL) threads the bilayer. Residues 141 to 142 (GR) are Extracellular-facing. The helical transmembrane segment at 143–163 (VLLGVGVGFANQSVPLYLSEM) threads the bilayer. Topologically, residues 164-169 (APARLR) are cytoplasmic. Residues 170–190 (GMLNIGFQLMITIGILCANLI) traverse the membrane as a helical segment. Residues 191 to 204 (NYGTAKIKGGWGWR) lie on the Extracellular side of the membrane. Residues 205-225 (VSLALAAVPAAIIAVGALFLP) traverse the membrane as a helical segment. The Cytoplasmic portion of the chain corresponds to 226 to 291 (DTPNSLIDRG…YRPQLTMAIA (66 aa)). A helical transmembrane segment spans residues 292–312 (IPLFQQLTGINVIMFYAPVLF). At 313-323 (KTLGFADDASL) the chain is on the extracellular side. A helical membrane pass occupies residues 324–344 (MSAVITGLVNVFATFVSIVTV). The Cytoplasmic portion of the chain corresponds to 345 to 359 (DRLGRRKLFLQGGTQ). A helical membrane pass occupies residues 360–380 (MLACQIVVGSLIGAKFGFSGV). At 381-388 (ADIPKAYA) the chain is on the extracellular side. The chain crosses the membrane as a helical span at residues 389–409 (AFVVLFICAYVAGFAWSWGPL). At 410 to 428 (GWLVPSEIFPLEIRSAGQS) the chain is on the cytoplasmic side. The helical transmembrane segment at 429–449 (INVSVNMLFTFIIAQAFLPML) threads the bilayer. Over 450–453 (CRFK) the chain is Extracellular. The chain crosses the membrane as a helical span at residues 454-474 (FILFFFFGAWVVIMTLFVAFF). Topologically, residues 475–530 (LPETKNVPIEEMVLVWKSHWYWGRFIRDEDVHVGADVEMPAAGNRNGKVDPAKLAN) are cytoplasmic.

The protein belongs to the major facilitator superfamily. Sugar transporter (TC 2.A.1.1) family. Expressed in leaf blades, leaf sheaths, anthers, ovaries and embryos. Expressed at low levels in roots and shoots.

Its subcellular location is the cell membrane. Functionally, mediates active uptake of hexoses by sugar:proton symport. Can transport glucose, fructose, mannose, galactose, xylose and ribose. The protein is Sugar transport protein MST6 of Oryza sativa subsp. japonica (Rice).